A 603-amino-acid chain; its full sequence is Elongation factor 4 (603 aa).

The region spanning 7–189 (SRLRNFCIIA…AVVDRIPSPK (183 aa)) is the tr-type G domain. GTP is bound by residues 19 to 24 (DHGKST) and 136 to 139 (NKVD).

This sequence belongs to the TRAFAC class translation factor GTPase superfamily. Classic translation factor GTPase family. LepA subfamily.

It is found in the cell inner membrane. The enzyme catalyses GTP + H2O = GDP + phosphate + H(+). Functionally, required for accurate and efficient protein synthesis under certain stress conditions. May act as a fidelity factor of the translation reaction, by catalyzing a one-codon backward translocation of tRNAs on improperly translocated ribosomes. Back-translocation proceeds from a post-translocation (POST) complex to a pre-translocation (PRE) complex, thus giving elongation factor G a second chance to translocate the tRNAs correctly. Binds to ribosomes in a GTP-dependent manner. The protein is Elongation factor 4 of Prochlorococcus marinus (strain NATL2A).